A 505-amino-acid polypeptide reads, in one-letter code: One cut domain family member 2 (505 aa).

Disordered regions lie at residues 29-94 (LGTL…GTAA), 165-190 (KFHH…RLSG), and 275-333 (EQHL…QLEE). A compositionally biased stretch (gly residues) spans 35–56 (PVGGGSGGGGGGGGGGGGGGPG). Residues 167–187 (HHPHPHHHPHHHHHHHHHHQR) are compositionally biased toward basic residues. The segment at residues 325 to 411 (VATSGQLEEI…QRMSALRLAA (87 aa)) is a DNA-binding region (CUT). The segment at residues 427-486 (QKKSRLVFTDLQRRTLFAIFKENKRPSKEMQITISQQLGLELTTVSNFFMNARRRSLEKW) is a DNA-binding region (homeobox).

It belongs to the CUT homeobox family.

It is found in the nucleus. Its function is as follows. Transcriptional activator. Activates the transcription of a number of liver genes such as HNF3B. The polypeptide is One cut domain family member 2 (Onecut2) (Mus musculus (Mouse)).